Here is a 144-residue protein sequence, read N- to C-terminus: Protection of telomeres protein 1c (144 aa).

Belongs to the telombin family. In terms of tissue distribution, expressed at extremely low levels at the limit of detection.

The protein localises to the nucleus. The protein resides in the chromosome. It is found in the telomere. Functionally, binds specifically single-stranded telomeric DNA with weak affinity. Has probably no function in the regulation of telomere length. In Arabidopsis thaliana (Mouse-ear cress), this protein is Protection of telomeres protein 1c.